The chain runs to 178 residues: Cytidylate kinase 2 (178 aa).

ATP is bound at residue 7–15; that stretch reads GKSGCGNTT.

Belongs to the cytidylate kinase family. Type 2 subfamily.

It localises to the cytoplasm. The enzyme catalyses CMP + ATP = CDP + ADP. It catalyses the reaction dCMP + ATP = dCDP + ADP. This Borreliella afzelii (strain PKo) (Borrelia afzelii) protein is Cytidylate kinase 2.